A 136-amino-acid chain; its full sequence is Large ribosomal subunit protein uL16 (136 aa).

The protein belongs to the universal ribosomal protein uL16 family. As to quaternary structure, part of the 50S ribosomal subunit.

Functionally, binds 23S rRNA and is also seen to make contacts with the A and possibly P site tRNAs. In Erwinia tasmaniensis (strain DSM 17950 / CFBP 7177 / CIP 109463 / NCPPB 4357 / Et1/99), this protein is Large ribosomal subunit protein uL16.